Consider the following 490-residue polypeptide: MNYQRLAQLQKLVPQMRQVKRIHFIGIGGVGMSGIAKILLHEGYQISGSDLVQNKVTKHLVALGVSIKFQHIPENVLDANVVVVSSAISIANPEIVAAKKLRIPIITRAEMLAELMRFRYGIAIAGTHGKTTTTAMLASIYLEAGLDPTIVNGGLIKSIGQYARLGYGSYLIAEADESDLSFLHLQPIVTIITNIEADHMENYQGDFNYLKNTFLKFIHKLPFYGKGIMCLDDPVIRDLLPHISRHIITYGFNSKANFRLTNYHQKEAHVSFQLYRQDKPTLRIELNSPGRHNALNAVAAIAVATEEGIADKNILQALFRFKGINRRFDKLGCFSLKKINGKNGVVMLVEDYGHHPTELQATIQSVRIGWPDKRLVMVFQPHRYTRTRDLYEYFVGVLSKVDVLLMLDIYPAGENPIAGIDSKSLCCTIRNTSKLDPIFIHELNKLPVMLAQLLQDNDLVLMQGAGSIGLIASQLAIGKLQTNIRHNPLI.

ATP is bound at residue 126-132 (GTHGKTT).

It belongs to the MurCDEF family.

Its subcellular location is the cytoplasm. The enzyme catalyses UDP-N-acetyl-alpha-D-muramate + L-alanine + ATP = UDP-N-acetyl-alpha-D-muramoyl-L-alanine + ADP + phosphate + H(+). It participates in cell wall biogenesis; peptidoglycan biosynthesis. Functionally, cell wall formation. The sequence is that of UDP-N-acetylmuramate--L-alanine ligase from Baumannia cicadellinicola subsp. Homalodisca coagulata.